The sequence spans 428 residues: Aerobic C4-dicarboxylate transport protein (428 aa).

A run of 9 helical transmembrane segments spans residues L5–Y27, M47–M64, A77–V99, V141–A163, V184–F206, L216–L238, V289–M311, I326–G348, and V353–I375.

Belongs to the dicarboxylate/amino acid:cation symporter (DAACS) (TC 2.A.23) family.

It is found in the cell inner membrane. Responsible for the transport of dicarboxylates such as succinate, fumarate, and malate from the periplasm across the inner membrane. This chain is Aerobic C4-dicarboxylate transport protein (dctA), found in Salmonella typhimurium (strain LT2 / SGSC1412 / ATCC 700720).